The sequence spans 166 residues: Putative 4-hydroxy-4-methyl-2-oxoglutarate aldolase 2 (166 aa).

A2 is modified (N-acetylalanine). Substrate contacts are provided by residues 81 to 84 and R103; that span reads GGNP. D104 lines the a divalent metal cation pocket.

Belongs to the class II aldolase/RraA-like family. In terms of assembly, homotrimer. A divalent metal cation serves as cofactor.

It catalyses the reaction 4-hydroxy-4-methyl-2-oxoglutarate = 2 pyruvate. The catalysed reaction is oxaloacetate + H(+) = pyruvate + CO2. Its function is as follows. Catalyzes the aldol cleavage of 4-hydroxy-4-methyl-2-oxoglutarate (HMG) into 2 molecules of pyruvate. Also contains a secondary oxaloacetate (OAA) decarboxylase activity due to the common pyruvate enolate transition state formed following C-C bond cleavage in the retro-aldol and decarboxylation reactions. This is Putative 4-hydroxy-4-methyl-2-oxoglutarate aldolase 2 from Arabidopsis thaliana (Mouse-ear cress).